We begin with the raw amino-acid sequence, 204 residues long: Adenylyl-sulfate kinase (204 aa).

34–41 (GLSGSGKS) lines the ATP pocket. Ser108 serves as the catalytic Phosphoserine intermediate.

Belongs to the APS kinase family.

It catalyses the reaction adenosine 5'-phosphosulfate + ATP = 3'-phosphoadenylyl sulfate + ADP + H(+). The protein operates within sulfur metabolism; hydrogen sulfide biosynthesis; sulfite from sulfate: step 2/3. Its function is as follows. Catalyzes the synthesis of activated sulfate. This is Adenylyl-sulfate kinase from Phocaeicola vulgatus (strain ATCC 8482 / DSM 1447 / JCM 5826 / CCUG 4940 / NBRC 14291 / NCTC 11154) (Bacteroides vulgatus).